A 491-amino-acid polypeptide reads, in one-letter code: Carboxypeptidase SOL1 (491 aa).

An N-terminal signal peptide occupies residues 1–25 (MSKLRFFQSLLISTVICFFLPSINA). Over 26–452 (RGGHSDHIHP…LLTQFFTETN (427 aa)) the chain is Extracellular. Asparagine 39 carries an N-linked (GlcNAc...) asparagine glycan. One can recognise a Peptidase M14 domain in the interval 64–338 (GYMTNDDLEK…KSMLNLVASL (275 aa)). Positions 125 and 128 each coordinate Zn(2+). Residues 125-128 (HGDE) and 186-187 (NR) contribute to the substrate site. Histidine 226 contacts Zn(2+). Asparagine 268 carries an N-linked (GlcNAc...) asparagine glycan. Substrate is bound at residue tyrosine 286. The Proton donor/acceptor role is filled by glutamate 308. A helical transmembrane segment spans residues 453 to 470 (NGITLTLFVVVVFLCFLL). The Cytoplasmic portion of the chain corresponds to 471-491 (QRRVRFNLWKQRQSSRRSITV).

It belongs to the peptidase M14 family. Requires Zn(2+) as cofactor. Expressed in roots, shoots, leaves, flowers and siliques.

Its subcellular location is the endosome membrane. Functionally, possesses in vitro carboxypeptidase activity against the C-terminal arginine and lysine residues. Involved in the maturation of CLE19. Removes the C-terminal arginine residue of CLE19 proprotein. The cleavage of the C-terminal arginine residue is necessary for CLE19 activity in vivo. Is not involved in generating active CLV3. Is not involved in CLE19 or CLV3 perception. This chain is Carboxypeptidase SOL1, found in Arabidopsis thaliana (Mouse-ear cress).